An 86-amino-acid chain; its full sequence is MANIKSQKKRVRTNEKAHQRNVAVKSALKTYIRRTREAIASGDKAAAEAAFAIAGRKLDQAAGKGVIAKNQAANRKSSLALQINAM.

Over residues 1 to 11 the composition is skewed to basic residues; sequence MANIKSQKKRV. Residues 1–20 form a disordered region; that stretch reads MANIKSQKKRVRTNEKAHQR.

This sequence belongs to the bacterial ribosomal protein bS20 family.

Binds directly to 16S ribosomal RNA. This chain is Small ribosomal subunit protein bS20, found in Bifidobacterium animalis subsp. lactis (strain AD011).